The primary structure comprises 594 residues: ATP-dependent lipid A-core flippase (594 aa).

6 consecutive transmembrane segments (helical) span residues 35–55, 64–84, 135–155, 161–181, 262–282, and 289–309; these read FVLA…IPKV, FGGS…GVAL, AVIF…ITLV, VVAL…VVAV, VTAF…MIQA, and IGGF…LKHL. An ABC transmembrane type-1 domain is found at 36-318; the sequence is VLAIIAMGLV…LADLNQPLQR (283 aa). The region spanning 350 to 588 is the ABC transporter domain; that stretch reads LVFDNVGFRY…NGLYAGLHRI (239 aa). Residue 384–391 participates in ATP binding; it reads GPSGSGKT.

This sequence belongs to the ABC transporter superfamily. Lipid exporter (TC 3.A.1.106) family. In terms of assembly, homodimer.

Its subcellular location is the cell inner membrane. It carries out the reaction ATP + H2O + lipid A-core oligosaccharideSide 1 = ADP + phosphate + lipid A-core oligosaccharideSide 2.. In terms of biological role, involved in lipopolysaccharide (LPS) biosynthesis. Translocates lipid A-core from the inner to the outer leaflet of the inner membrane. Transmembrane domains (TMD) form a pore in the inner membrane and the ATP-binding domain (NBD) is responsible for energy generation. The chain is ATP-dependent lipid A-core flippase from Cupriavidus metallidurans (strain ATCC 43123 / DSM 2839 / NBRC 102507 / CH34) (Ralstonia metallidurans).